A 108-amino-acid chain; its full sequence is DNA-directed RNA polymerase III subunit RPC10 (108 aa).

Cysteine 5, cysteine 8, cysteine 25, cysteine 28, cysteine 69, and cysteine 72 together coordinate Zn(2+). The C4-type zinc finger occupies 5 to 28 (CPGCGNGLIVEEGQRCHRFACNTC). The TFIIS-type zinc finger occupies 65–107 (TAESCPKCEHPRAYFMQLQTRSADEPMTTFYKCCNAQCGHRWR). The Hairpin signature appears at 88–89 (DE). Residues cysteine 98 and cysteine 102 each contribute to the Zn(2+) site.

It belongs to the archaeal RpoM/eukaryotic RPA12/RPB9/RPC11 RNA polymerase family. As to quaternary structure, component of the RNA polymerase III complex consisting of 17 subunits: a ten-subunit horseshoe-shaped catalytic core composed of POLR3A/RPC1, POLR3B/RPC2, POLR1C/RPAC1, POLR1D/RPAC2, POLR3K/RPC10, POLR2E/RPABC1, POLR2F/RPABC2, POLR2H/RPABC3, POLR2K/RPABC4 and POLR2L/RPABC5; a mobile stalk composed of two subunits POLR3H/RPC8 and CRCP/RPC9, protruding from the core and functioning primarily in transcription initiation; and additional subunits homologous to general transcription factors of the RNA polymerase II machinery, POLR3C/RPC3-POLR3F/RPC6-POLR3G/RPC7 heterotrimer required for transcription initiation and POLR3D/RPC4-POLR3E/RPC5 heterodimer involved in both transcription initiation and termination.

Its subcellular location is the nucleus. Core component of RNA polymerase III (Pol III) which synthesizes small non-coding RNAs using the four ribonucleoside triphosphates as substrates. Can mediate Pol I proofreading of the nascent RNA transcript. Anchors into the Pol III active site to constantly monitor transcription fidelity, cleaves mis-incorporated 5'-ribonucleotides and restarts the transcription process. Once Pol III reaches the poly(dT) termination signal, can induce Pol III clamp opening and transcription termination. Pol III plays an important role in sensing and limiting infection by intracellular bacteria and DNA viruses. Acts as a nuclear and cytosolic DNA sensor involved in innate immune response. Can sense non-self dsDNA that serves as template for transcription into dsRNA. The non-self RNA polymerase III transcripts, such as Epstein-Barr virus-encoded RNAs (EBERs) induce type I interferon and NF-kappa-B through the RIG-I pathway. This Homo sapiens (Human) protein is DNA-directed RNA polymerase III subunit RPC10.